Consider the following 415-residue polypeptide: Serine hydroxymethyltransferase (415 aa).

Residues leucine 121 and 125 to 127 contribute to the (6S)-5,6,7,8-tetrahydrofolate site; that span reads GHL. Lysine 230 bears the N6-(pyridoxal phosphate)lysine mark. 355–357 lines the (6S)-5,6,7,8-tetrahydrofolate pocket; that stretch reads SPF.

The protein belongs to the SHMT family. Homodimer. Requires pyridoxal 5'-phosphate as cofactor.

It localises to the cytoplasm. The enzyme catalyses (6R)-5,10-methylene-5,6,7,8-tetrahydrofolate + glycine + H2O = (6S)-5,6,7,8-tetrahydrofolate + L-serine. It functions in the pathway one-carbon metabolism; tetrahydrofolate interconversion. It participates in amino-acid biosynthesis; glycine biosynthesis; glycine from L-serine: step 1/1. Catalyzes the reversible interconversion of serine and glycine with tetrahydrofolate (THF) serving as the one-carbon carrier. This reaction serves as the major source of one-carbon groups required for the biosynthesis of purines, thymidylate, methionine, and other important biomolecules. Also exhibits THF-independent aldolase activity toward beta-hydroxyamino acids, producing glycine and aldehydes, via a retro-aldol mechanism. This is Serine hydroxymethyltransferase from Lactococcus lactis subsp. cremoris (strain SK11).